A 326-amino-acid chain; its full sequence is Probable cell division protein WhiA (326 aa).

Positions 275 to 308 form a DNA-binding region, H-T-H motif; that stretch reads SLEELGQLSDPPLTKDAVAGRIRRLLAMADKKAS.

The protein belongs to the WhiA family.

Involved in cell division and chromosome segregation. This chain is Probable cell division protein WhiA, found in Beutenbergia cavernae (strain ATCC BAA-8 / DSM 12333 / CCUG 43141 / JCM 11478 / NBRC 16432 / NCIMB 13614 / HKI 0122).